Reading from the N-terminus, the 210-residue chain is Putative protein-lysine deacylase ABHD14B (210 aa).

Ser-91 carries the phosphoserine modification. Active-site charge relay system residues include Ser-111, Asp-162, and His-188.

This sequence belongs to the AB hydrolase superfamily. ABHD14 family. May interact with TAF1.

The protein resides in the cytoplasm. It localises to the nucleus. The enzyme catalyses L-lysyl-[protein] + acetyl-CoA = N(6)-acetyl-L-lysyl-[protein] + CoA + H(+). In terms of biological role, acts as an atypical protein-lysine deacetylase in vitro. Catalyzes the deacetylation of lysine residues using CoA as substrate, generating acetyl-CoA and the free amine of protein-lysine residues. Additional experiments are however required to confirm the protein-lysine deacetylase activity in vivo. Has hydrolase activity towards various surrogate p-nitrophenyl (pNp) substrates, such as pNp-butyrate, pNp-acetate and pNp-octanoate in vitro, with a strong preference for pNp-acetate. May activate transcription. The chain is Putative protein-lysine deacylase ABHD14B from Rattus norvegicus (Rat).